A 689-amino-acid polypeptide reads, in one-letter code: DNA polymerase epsilon subunit B (689 aa).

Residues 98-115 show a composition bias toward basic and acidic residues; sequence EWSHEHPIQHEENILGRT. Positions 98–155 are disordered; that stretch reads EWSHEHPIQHEENILGRTDDDENNSDDEMPIAADSSLQNVSLSSPMRQPTERDEYKQP. Residues 116–126 are compositionally biased toward acidic residues; sequence DDDENNSDDEM. At Ser-122 the chain carries Phosphoserine. Positions 132–144 are enriched in polar residues; that stretch reads SSLQNVSLSSPMR. Ser-141 carries the post-translational modification Phosphoserine; by CDC28. Residues 146–155 are compositionally biased toward basic and acidic residues; sequence PTERDEYKQP. Residue Ser-613 is modified to Phosphoserine.

It belongs to the DNA polymerase epsilon subunit B family. As to quaternary structure, DNA polymerase epsilon is a heterotetramer consisting of POL2, DPB2, DPB3 and DPB4. In terms of processing, phosphorylated in a cell cycle dependent manner during late G1 phase. Phosphorylation may facilitate the interaction with POL2 or the activity of DNA polymerase II. Phosphorylation is independent of DNA replication but dependent upon CDC28 in vivo. Both Ser-141 and Ser-613 are phosphorylated in vivo, but in vitro only Ser-141 is phosphorylated by CDC28.

The protein resides in the cytoplasm. It is found in the nucleus. In terms of biological role, as accessory component of the DNA polymerase epsilon complex participates in chromosomal DNA replication. It is required during synthesis of the leading and lagging DNA strands at the replication fork and binds at/or near replication origins and moves along DNA with the replication fork. It has 3'-5' proofreading exonuclease activity that correct errors arising during DNA replication. It is also involved in DNA synthesis during DNA repair. This Saccharomyces cerevisiae (strain ATCC 204508 / S288c) (Baker's yeast) protein is DNA polymerase epsilon subunit B (DPB2).